The primary structure comprises 2455 residues: Ectopic P granules protein 5 homolog (2455 aa).

Positions 1–42 (MATLEKPKKEKSKKSRNRVPIEKEEEEPAELSTSEEQRPAEN) are disordered. S44 is modified (phosphoserine). Residues 77-105 (VTSQEPEGTQEPTETEAQPSAPSAPPSTT) form a disordered region. Over residues 80–97 (QEPEGTQEPTETEAQPSA) the composition is skewed to low complexity. S467 carries the post-translational modification Phosphoserine.

This sequence belongs to the EPG5 family.

It is found in the cytoplasm. The protein resides in the perinuclear region. It localises to the lysosome. Involved in autophagy. Plays a role in late steps of autophagy. This chain is Ectopic P granules protein 5 homolog, found in Drosophila melanogaster (Fruit fly).